A 261-amino-acid polypeptide reads, in one-letter code: MDKDLSLDNLRKKIRSNEFTKATSGYAPGYLQANLVILPALWATDFLLFCQKNPVACPLIDVTQPGERYLPSIGADIDLSRDVPEYHVFYEGNFEASVPDLTELWQDDLVTFVLGCSFSFEEALIQSGLSIRNIDDGKNVSMYDTNIACQPAGKFDGNFVVSMRPFTPKDAIRAIQITTRFPKSHGAPVHFGDPSVIGISDIAKPNYGEAVHINSDEIPVFWACGVTPQNVIRQSRPPFCITHAPGKMLITDRLSSEFAVL.

The protein belongs to the D-glutamate cyclase family.

The protein is Putative hydro-lyase VSAL_I1435 of Aliivibrio salmonicida (strain LFI1238) (Vibrio salmonicida (strain LFI1238)).